The primary structure comprises 168 residues: uncharacterized protein (168 aa).

The helical transmembrane segment at 5–24 threads the bilayer; it reads IAWASACLLLVMLTGFFTIG.

The protein resides in the membrane. This is an uncharacterized protein from Bacillus subtilis (strain 168).